We begin with the raw amino-acid sequence, 97 residues long: MGWKSHGFRFKSGRKLRKKVREKGVRIRKFLQTFDVGQRVHIDIEPASQKGMPHPRFQGRTGVVIGQRGRAYLVQVRDGGKMKTLIVRPEHLKPQSG.

It belongs to the eukaryotic ribosomal protein eL21 family.

This chain is Large ribosomal subunit protein eL21 (rpl21e), found in Archaeoglobus fulgidus (strain ATCC 49558 / DSM 4304 / JCM 9628 / NBRC 100126 / VC-16).